A 393-amino-acid polypeptide reads, in one-letter code: Chalcone synthase G (393 aa).

Cysteine 164 is an active-site residue.

The protein belongs to the thiolase-like superfamily. Chalcone/stilbene synthases family. In terms of tissue distribution, expressed in seedlings after illumination with UV light. No expression detectable in flowers. It is not known for sure whether CHSG encodes a chalcone synthase or a very closely related condensing enzyme.

It catalyses the reaction (E)-4-coumaroyl-CoA + 3 malonyl-CoA + 3 H(+) = 2',4,4',6'-tetrahydroxychalcone + 3 CO2 + 4 CoA. It functions in the pathway secondary metabolite biosynthesis; flavonoid biosynthesis. Functionally, the primary product of this enzyme is 4,2',4',6'-tetrahydroxychalcone (also termed naringenin-chalcone or chalcone) which can under specific conditions spontaneously isomerize into naringenin. The sequence is that of Chalcone synthase G (CHSG) from Petunia hybrida (Petunia).